A 164-amino-acid chain; its full sequence is PTS system sorbose-specific EIIB component (164 aa).

Residues 1 to 164 (MQITLARIDD…DKINETAFCE (164 aa)) enclose the PTS EIIB type-4 domain. The active-site Pros-phosphohistidine intermediate is His-14. A Phosphohistidine; by EIIA modification is found at His-14.

In terms of assembly, dimer of dimers.

The protein resides in the cytoplasm. It carries out the reaction keto-L-sorbose(out) + N(pros)-phospho-L-histidyl-[protein] = L-sorbose 1-phosphate(in) + L-histidyl-[protein]. In terms of biological role, the phosphoenolpyruvate-dependent sugar phosphotransferase system (PTS), a major carbohydrate active transport system, catalyzes the phosphorylation of incoming sugar substrates concomitant with their translocation across the cell membrane. The enzyme II SorABFM PTS system is involved in L-sorbose transport. This Klebsiella pneumoniae protein is PTS system sorbose-specific EIIB component.